A 511-amino-acid chain; its full sequence is Archaeal glutamate synthase [NADPH] (511 aa).

2 4Fe-4S ferredoxin-type domains span residues 15 to 44 and 46 to 75; these read FMIERRQDRCIRCRVCERQCGFNVHWYDEE and DMMREDEMKCVGCQRCAVMCPTNALVVKPH. 8 residues coordinate [4Fe-4S] cluster: Cys24, Cys27, Cys30, Cys34, Cys55, Cys58, Cys61, and Cys65.

Belongs to the glutamate synthase family. FMN serves as cofactor.

The enzyme catalyses 2 L-glutamate + NADP(+) = L-glutamine + 2-oxoglutarate + NADPH + H(+). This chain is Archaeal glutamate synthase [NADPH], found in Archaeoglobus fulgidus (strain ATCC 49558 / DSM 4304 / JCM 9628 / NBRC 100126 / VC-16).